The chain runs to 412 residues: Peptidase T (412 aa).

A Zn(2+)-binding site is contributed by His-83. The active site involves Asp-85. Asp-145 provides a ligand contact to Zn(2+). The active-site Proton acceptor is Glu-179. Zn(2+) contacts are provided by Glu-180, Asp-202, and His-384.

Belongs to the peptidase M20B family. It depends on Zn(2+) as a cofactor.

It is found in the cytoplasm. It carries out the reaction Release of the N-terminal residue from a tripeptide.. In terms of biological role, cleaves the N-terminal amino acid of tripeptides. The chain is Peptidase T from Fusobacterium nucleatum subsp. nucleatum (strain ATCC 25586 / DSM 15643 / BCRC 10681 / CIP 101130 / JCM 8532 / KCTC 2640 / LMG 13131 / VPI 4355).